Here is a 938-residue protein sequence, read N- to C-terminus: Isoleucine--tRNA ligase (938 aa).

Residues 58–68 (PYANGSIHIGH) carry the 'HIGH' region motif. Lys-183 bears the N6-acetyllysine mark. Glu-561 contributes to the L-isoleucyl-5'-AMP binding site. A 'KMSKS' region motif is present at residues 602 to 606 (KMSKS). ATP is bound at residue Lys-605. 4 residues coordinate Zn(2+): Cys-901, Cys-904, Cys-921, and Cys-924.

This sequence belongs to the class-I aminoacyl-tRNA synthetase family. IleS type 1 subfamily. In terms of assembly, monomer. The cofactor is Zn(2+).

The protein localises to the cytoplasm. The catalysed reaction is tRNA(Ile) + L-isoleucine + ATP = L-isoleucyl-tRNA(Ile) + AMP + diphosphate. Catalyzes the attachment of isoleucine to tRNA(Ile). As IleRS can inadvertently accommodate and process structurally similar amino acids such as valine, to avoid such errors it has two additional distinct tRNA(Ile)-dependent editing activities. One activity is designated as 'pretransfer' editing and involves the hydrolysis of activated Val-AMP. The other activity is designated 'posttransfer' editing and involves deacylation of mischarged Val-tRNA(Ile). This chain is Isoleucine--tRNA ligase, found in Escherichia coli (strain ATCC 8739 / DSM 1576 / NBRC 3972 / NCIMB 8545 / WDCM 00012 / Crooks).